A 510-amino-acid polypeptide reads, in one-letter code: Aspartate kinase FUB3 (510 aa).

2 consecutive ACT domains span residues 372–440 and 446–510; these read ILSN…VLPD and LVGA…KNAI.

It belongs to the aspartokinase family.

The enzyme catalyses L-aspartate + ATP = 4-phospho-L-aspartate + ADP. It participates in mycotoxin biosynthesis. Functionally, aspartate kinase; part of the gene cluster that mediates the biosynthesis of fusaric acid, a mycotoxin with low to moderate toxicity to animals and humans, but with high phytotoxic properties. L-aspartate is suggested as fusaric acid amino acid precursor that is activated and further processed to O-acetyl-L-homoserine by cluster enzymes aspartate kinase FUB3 and homoserine O-acetyltransferase FUB5, as well as enzymes of the primary metabolism. The polyketide synthase (PKS) FUB1 generates the triketide trans-2-hexenal which is presumptively released by the hydrolase FUB4 and linked to the NRPS-bound amino acid precursor by NAD(P)-dependent dehydrogenase FUB6. FUB1, FUB4, and the non-canonical NRPS Fub8 may form an enzyme complex. Further processing of the NRPS-bound intermediate might be carried out by FUB6 and the sulfhydrylase FUB7, enabling a spontaneous electrocyclization to close the carbon backbone of fusaric acid. Dihydrofusaric acid is likely to be released via reduction by the thioester reductase (TR) domain of FUB8 whereupon the final oxidation to fusaric acid may (also) be performed by the FMN-dependent dehydrogenase FUB9. The polypeptide is Aspartate kinase FUB3 (Gibberella fujikuroi (strain CBS 195.34 / IMI 58289 / NRRL A-6831) (Bakanae and foot rot disease fungus)).